The sequence spans 235 residues: Purine nucleoside phosphorylase DeoD-type (235 aa).

Residue H4 coordinates a purine D-ribonucleoside. Phosphate-binding positions include G20, R24, R43, and 87–90; that span reads RVGT. Residues E162, 179 to 181, and 203 to 204 contribute to the a purine D-ribonucleoside site; these read EME and SD. D204 functions as the Proton donor in the catalytic mechanism.

The protein belongs to the PNP/UDP phosphorylase family. As to quaternary structure, homohexamer; trimer of homodimers.

It catalyses the reaction a purine D-ribonucleoside + phosphate = a purine nucleobase + alpha-D-ribose 1-phosphate. The enzyme catalyses a purine 2'-deoxy-D-ribonucleoside + phosphate = a purine nucleobase + 2-deoxy-alpha-D-ribose 1-phosphate. In terms of biological role, catalyzes the reversible phosphorolytic breakdown of the N-glycosidic bond in the beta-(deoxy)ribonucleoside molecules, with the formation of the corresponding free purine bases and pentose-1-phosphate. This Bacillus anthracis (strain CDC 684 / NRRL 3495) protein is Purine nucleoside phosphorylase DeoD-type.